A 195-amino-acid polypeptide reads, in one-letter code: uncharacterized protein (195 aa).

This is an uncharacterized protein from Acidianus hospitalis (AFV-1).